The primary structure comprises 876 residues: Leucine--tRNA ligase (876 aa).

Positions 43–53 match the 'HIGH' region motif; that stretch reads PYPSGRIHMGH. The 'KMSKS' region motif lies at 632–636; it reads KMSKS. Lys-635 contributes to the ATP binding site.

This sequence belongs to the class-I aminoacyl-tRNA synthetase family.

The protein localises to the cytoplasm. It catalyses the reaction tRNA(Leu) + L-leucine + ATP = L-leucyl-tRNA(Leu) + AMP + diphosphate. This chain is Leucine--tRNA ligase, found in Sinorhizobium medicae (strain WSM419) (Ensifer medicae).